A 227-amino-acid chain; its full sequence is Cytidylate kinase (227 aa).

ATP is bound at residue 12-20; it reads GPSGAGKGT.

Belongs to the cytidylate kinase family. Type 1 subfamily.

The protein resides in the cytoplasm. The enzyme catalyses CMP + ATP = CDP + ADP. It catalyses the reaction dCMP + ATP = dCDP + ADP. This chain is Cytidylate kinase, found in Salmonella typhimurium (strain LT2 / SGSC1412 / ATCC 700720).